The primary structure comprises 150 residues: Small ribosomal subunit protein eS19 (150 aa).

It belongs to the eukaryotic ribosomal protein eS19 family. Part of the 30S ribosomal subunit.

Its function is as follows. May be involved in maturation of the 30S ribosomal subunit. The chain is Small ribosomal subunit protein eS19 from Thermococcus kodakarensis (strain ATCC BAA-918 / JCM 12380 / KOD1) (Pyrococcus kodakaraensis (strain KOD1)).